Here is a 299-residue protein sequence, read N- to C-terminus: Taste receptor type 2 member 50 (299 aa).

Methionine 1 is a topological domain (extracellular). Residues 2–22 (ITFLYIFFSILIMVLFVLGNF) traverse the membrane as a helical segment. Over 23-55 (ANGFIALVNFIDWVKRKKISSADQILTALAVSR) the chain is Cytoplasmic. A helical transmembrane segment spans residues 56–76 (IGLLWTLLLNWYLTVLNPAFY). Residues 77–87 (SVELRITSYNA) lie on the Extracellular side of the membrane. Residues 88 to 108 (WVVTNHFSMWLAASLSIFYLL) form a helical membrane-spanning segment. Topologically, residues 109-126 (KIANFSNLIFLHLKRRVR) are cytoplasmic. The chain crosses the membrane as a helical span at residues 127-147 (SVILVILLGTLIFLVCHLLVA). The Extracellular segment spans residues 148 to 181 (NMDESMWAEEYEGNITGKMKLRNTVHLSYLTVTT). The N-linked (GlcNAc...) asparagine glycan is linked to asparagine 161. Residues 182–202 (LWSFIPFTLSLISFLMLICSL) traverse the membrane as a helical segment. Topologically, residues 203–229 (CKHLKKMQLHGEGSQDLSTKVHIKALQ) are cytoplasmic. A helical transmembrane segment spans residues 230–250 (TLISFLLLCAIFFLFLIISVW). Residues 251–259 (SPRRLRNDP) are Extracellular-facing. Residues 260 to 280 (VVMVSKAVGNIYLAFDSFILI) traverse the membrane as a helical segment. Residues 281-299 (WRTKKLKHTFLLILCQIRC) lie on the Cytoplasmic side of the membrane.

The protein belongs to the G-protein coupled receptor T2R family.

It localises to the membrane. Its function is as follows. Receptor that may play a role in the perception of bitterness and is gustducin-linked. May play a role in sensing the chemical composition of the gastrointestinal content. The activity of this receptor may stimulate alpha gustducin, mediate PLC-beta-2 activation and lead to the gating of TRPM5. The chain is Taste receptor type 2 member 50 (TAS2R50) from Pan paniscus (Pygmy chimpanzee).